The primary structure comprises 232 residues: MAKELIGNDWDKVLDPVFASDKYHELHNFLKEEYSNKRIFPDMYHIFTAFKLTPFNKTKVVILGQDPYHNPGQANGMSFSVMPGTPLPPSLRNIYKELYDDVGVRPVNHGYLKKWADQGVLLLNAVLTVPYAHANGHQGKGWEDVTDTAIKALSERGKVVFILWGRFAQNKIPLIDQSKNFIIKSSHPSPFSADRGFFGSRPFSRCNTALLNFGETPIDWQLSETVNKSDLA.

The Proton acceptor role is filled by Asp66.

This sequence belongs to the uracil-DNA glycosylase (UDG) superfamily. UNG family.

It is found in the cytoplasm. It carries out the reaction Hydrolyzes single-stranded DNA or mismatched double-stranded DNA and polynucleotides, releasing free uracil.. Its function is as follows. Excises uracil residues from the DNA which can arise as a result of misincorporation of dUMP residues by DNA polymerase or due to deamination of cytosine. This is Uracil-DNA glycosylase from Lactobacillus helveticus (strain DPC 4571).